The sequence spans 212 residues: Thymidylate kinase (212 aa).

ATP is bound at residue 11–18 (GLEGAGKT).

The protein belongs to the thymidylate kinase family.

The catalysed reaction is dTMP + ATP = dTDP + ADP. Its function is as follows. Phosphorylation of dTMP to form dTDP in both de novo and salvage pathways of dTTP synthesis. In Buchnera aphidicola subsp. Schizaphis graminum (strain Sg), this protein is Thymidylate kinase.